The sequence spans 334 residues: Dihydroorotate dehydrogenase (quinone) (334 aa).

FMN-binding positions include 59 to 63 (AGLDK) and T83. A substrate-binding site is contributed by K63. Residue 108–112 (NRMGF) coordinates substrate. FMN-binding residues include N136 and N169. N169 lines the substrate pocket. S172 acts as the Nucleophile in catalysis. N174 contacts substrate. The FMN site is built by K214 and T242. Substrate is bound at residue 243 to 244 (NT). Residues G265, G294, and 315-316 (YS) each bind FMN.

Belongs to the dihydroorotate dehydrogenase family. Type 2 subfamily. In terms of assembly, monomer. It depends on FMN as a cofactor.

It is found in the cell membrane. The catalysed reaction is (S)-dihydroorotate + a quinone = orotate + a quinol. The protein operates within pyrimidine metabolism; UMP biosynthesis via de novo pathway; orotate from (S)-dihydroorotate (quinone route): step 1/1. Its function is as follows. Catalyzes the conversion of dihydroorotate to orotate with quinone as electron acceptor. This Acinetobacter baylyi (strain ATCC 33305 / BD413 / ADP1) protein is Dihydroorotate dehydrogenase (quinone).